The chain runs to 421 residues: Testin (421 aa).

The PET domain maps to 92-199 (MILTNPVAAK…GDVKLPYEMG (108 aa)). Positions 133–164 (EKQPVAGSEGAQYRKKQLAKQLPAHDQDPSKC) are disordered. A compositionally biased stretch (basic and acidic residues) spans 155 to 164 (PAHDQDPSKC). LIM zinc-binding domains are found at residues 234 to 297 (YFCY…CDSE), 299 to 359 (PRCA…NHAV), and 362 to 421 (QGCH…KMMS).

The protein belongs to the prickle / espinas / testin family. Interacts via LIM domain 1 with ZYX. Interacts (via LIM domain 3) with ENAH and VASP. Interacts with ALKBH4, talin, actin, alpha-actinin, GRIP1 and PXN. Interacts (via LIM domain 2) with ACTL7A (via N-terminus). Heterodimer with ACTL7A; the heterodimer interacts with ENAH to form a heterotrimer.

The protein localises to the cytoplasm. It is found in the cell junction. It localises to the focal adhesion. In terms of biological role, scaffold protein that may play a role in cell adhesion, cell spreading and in the reorganization of the actin cytoskeleton. Plays a role in the regulation of cell proliferation. May act as a tumor suppressor. This Oryctolagus cuniculus (Rabbit) protein is Testin (TES).